The following is a 143-amino-acid chain: Transcriptional regulator MraZ (143 aa).

2 SpoVT-AbrB domains span residues 5-47 and 76-119; these read EYKH…SLKE and ACEC…SEEN.

Belongs to the MraZ family. In terms of assembly, forms oligomers.

Its subcellular location is the cytoplasm. It localises to the nucleoid. The sequence is that of Transcriptional regulator MraZ from Caldicellulosiruptor saccharolyticus (strain ATCC 43494 / DSM 8903 / Tp8T 6331).